Here is a 469-residue protein sequence, read N- to C-terminus: Ribosomal protein uS12 methylthiotransferase RimO (469 aa).

Residues 17 to 132 (PRVGFVSLGC…VMDAVHLNLP (116 aa)) enclose the MTTase N-terminal domain. 6 residues coordinate [4Fe-4S] cluster: cysteine 26, cysteine 62, cysteine 91, cysteine 167, cysteine 171, and cysteine 174. Residues 153 to 395 (LTPKHYAYLK…AVAEEVSSLK (243 aa)) enclose the Radical SAM core domain. A TRAM domain is found at 397–469 (QQRVGATMQV…QGHDLVAIPV (73 aa)).

It belongs to the methylthiotransferase family. RimO subfamily. Requires [4Fe-4S] cluster as cofactor.

It is found in the cytoplasm. It carries out the reaction L-aspartate(89)-[ribosomal protein uS12]-hydrogen + (sulfur carrier)-SH + AH2 + 2 S-adenosyl-L-methionine = 3-methylsulfanyl-L-aspartate(89)-[ribosomal protein uS12]-hydrogen + (sulfur carrier)-H + 5'-deoxyadenosine + L-methionine + A + S-adenosyl-L-homocysteine + 2 H(+). Catalyzes the methylthiolation of an aspartic acid residue of ribosomal protein uS12. The chain is Ribosomal protein uS12 methylthiotransferase RimO from Polaromonas sp. (strain JS666 / ATCC BAA-500).